The primary structure comprises 251 residues: CDP-diacylglycerol pyrophosphatase (251 aa).

Residues alanine 4–tryptophan 24 traverse the membrane as a helical segment.

It belongs to the Cdh family.

It is found in the cell inner membrane. The enzyme catalyses a CDP-1,2-diacyl-sn-glycerol + H2O = a 1,2-diacyl-sn-glycero-3-phosphate + CMP + 2 H(+). The protein operates within phospholipid metabolism; CDP-diacylglycerol degradation; phosphatidate from CDP-diacylglycerol: step 1/1. The polypeptide is CDP-diacylglycerol pyrophosphatase (Escherichia coli (strain ATCC 8739 / DSM 1576 / NBRC 3972 / NCIMB 8545 / WDCM 00012 / Crooks)).